A 546-amino-acid chain; its full sequence is Probable protein kinase UbiB (546 aa).

A Protein kinase domain is found at Asp124 to Phe502. ATP-binding positions include Leu130–Val138 and Lys153. Asp288 functions as the Proton acceptor in the catalytic mechanism. The next 2 helical transmembrane spans lie at Tyr501–Pro521 and Glu522–Trp542.

The protein belongs to the ABC1 family. UbiB subfamily.

It localises to the cell inner membrane. It participates in cofactor biosynthesis; ubiquinone biosynthesis [regulation]. Its function is as follows. Is probably a protein kinase regulator of UbiI activity which is involved in aerobic coenzyme Q (ubiquinone) biosynthesis. This Shigella sonnei (strain Ss046) protein is Probable protein kinase UbiB.